Consider the following 261-residue polypeptide: Uridine-cytidine kinase 2 (261 aa).

The segment at 1-24 is disordered; it reads MAGDSEQALPKHSPQNGQPFLIGV. Position 26 to 34 (26 to 34) interacts with ATP; that stretch reads GGTASGKSS. Substrate is bound by residues D83, Y111, H116, R165, R175, and Q183. D212 provides a ligand contact to ATP. The segment covering 238–247 has biased composition (polar residues); the sequence is NGYTNGFTSP. Positions 238–261 are disordered; that stretch reads NGYTNGFTSPRTRHPSDSNSSRPH.

It belongs to the uridine kinase family. In terms of assembly, homotetramer.

The enzyme catalyses uridine + ATP = UMP + ADP + H(+). It carries out the reaction cytidine + ATP = CMP + ADP + H(+). Its pathway is pyrimidine metabolism; CTP biosynthesis via salvage pathway; CTP from cytidine: step 1/3. The protein operates within pyrimidine metabolism; UMP biosynthesis via salvage pathway; UMP from uridine: step 1/1. Its function is as follows. Phosphorylates uridine and cytidine to uridine monophosphate and cytidine monophosphate. Does not phosphorylate deoxyribonucleosides or purine ribonucleosides. Can use ATP or GTP as a phosphate donor. The chain is Uridine-cytidine kinase 2 (uck2) from Xenopus tropicalis (Western clawed frog).